The primary structure comprises 292 residues: MIVASILILIVPVLLSVAMFTLAERTVMASMQRRFGPQVSGISGLLQPFWDGLKLGVKEPVLPDSSSAGAFAASPMISFVLSQVAWVGICISDASFQGLVIMAISSLAVYGVMLAGWASNSKYAFLGCLRSVALMVSYELSLGAALLSIGLFVTDGTGMKCLNFAEMPTTPQYAMLPLCLIFLVCILAETKRDPFDLPEAELVAGYNVEYSSLGFALFFIAEYANMAVMSAIASIYFLGGFSALKITALFFAFVWTRGTLPRYRYDQFMRLGWKAFLPLTLAFFALHASVAI.

8 helical membrane passes run 2–22, 71–91, 98–118, 132–152, 167–187, 213–233, 235–255, and 272–292; these read IVASILILIVPVLLSVAMFTL, FAASPMISFVLSQVAWVGICI, GLVIMAISSLAVYGVMLAGWA, VALMVSYELSLGAALLSIGLF, MPTTPQYAMLPLCLIFLVCIL, LGFALFFIAEYANMAVMSAIA, IYFLGGFSALKITALFFAFVW, and GWKAFLPLTLAFFALHASVAI.

The protein belongs to the complex I subunit 1 family.

It is found in the mitochondrion inner membrane. It catalyses the reaction a ubiquinone + NADH + 5 H(+)(in) = a ubiquinol + NAD(+) + 4 H(+)(out). Functionally, core subunit of the mitochondrial membrane respiratory chain NADH dehydrogenase (Complex I) that is believed to belong to the minimal assembly required for catalysis. Complex I functions in the transfer of electrons from NADH to the respiratory chain. The immediate electron acceptor for the enzyme is believed to be ubiquinone. The protein is NADH-ubiquinone oxidoreductase chain 1 (ND1) of Chlamydomonas reinhardtii (Chlamydomonas smithii).